Here is a 372-residue protein sequence, read N- to C-terminus: Protein phosphatase Mn(2+)-dependent 1K (372 aa).

The N-terminal 29 residues, M1–Q29, are a transit peptide targeting the mitochondrion. The segment at K46 to W61 is critical for association with the BCKDH complex. The PPM-type phosphatase domain maps to N94–F346. Residues D127 and G128 each coordinate Mn(2+). A Phosphoserine modification is found at S248. Mn(2+) contacts are provided by D298 and D337.

The protein belongs to the PP2C family. Monomer. Interacts with E1 and E2 components of the branched-chain alpha-ketoacid dehydrogenase (BCKDH) complex; this interaction requires colocalization in mitochondria. Interacts with BCKDHA but not with BCKDHB of the E1 component. Interacts with the 24-meric E2 core composed of DBT monomers with a 24:1 stoichiometry; the N-terminal region (residues 49-61) of PPM1K and C-terminal linker of the lipoyl domain of DBT (residues 145-160) are critical for this interaction, whereas the lipoyl prosthetic group is dispensable. Competes with BCKDK for binding to the E2 core; this interaction is modulated by branched-chain alpha-keto acids. At steady state, BCKDH holoenzyme preferentially binds BCKDK and BCKDHA is phosphorylated. In response to high levels of branched-chain alpha-keto acids, the inhibitory BCKDK is replaced by activating PPM1K leading to BCKDHA dephosphorylation and BCAA degradation. The cofactor is Mn(2+).

It is found in the mitochondrion matrix. The catalysed reaction is O-phospho-L-seryl-[3-methyl-2-oxobutanoate dehydrogenase] + H2O = L-seryl-[3-methyl-2-oxobutanoate dehydrogenase] + phosphate. It catalyses the reaction O-phospho-L-seryl-[protein] + H2O = L-seryl-[protein] + phosphate. Its pathway is protein modification. In terms of biological role, serine/threonine-protein phosphatase component of macronutrients metabolism. Forms a functional kinase and phosphatase pair with BCKDK, serving as a metabolic regulatory node that coordinates branched-chain amino acids (BCAAs) with glucose and lipid metabolism via two distinct phosphoprotein targets: mitochondrial BCKDHA subunit of the branched-chain alpha-ketoacid dehydrogenase (BCKDH) complex and cytosolic ACLY, a lipogenic enzyme of Krebs cycle. At high levels of branched-chain ketoacids, dephosphorylates and activates mitochondrial BCKDH complex, a multisubunit complex consisting of three multimeric components each involved in different steps of BCAA catabolism: E1 composed of BCKDHA and BCKDHB, E2 core composed of DBT monomers, and E3 composed of DLD monomers. Tightly associates with the E2 component of BCKDH complex and dephosphorylates BCKDHA on Ser-347. Regulates the reversible phosphorylation of ACLY in response to changes in cellular carbohydrate abundance such as occurs during fasting to feeding metabolic transition. At fasting state, appears to dephosphorylate ACLY on Ser-455 and inactivate it. Refeeding stimulates MLXIPL/ChREBP transcription factor, leading to increased BCKDK to PPM1K expression ratio, phosphorylation and activation of ACLY that ultimately results in the generation of malonyl-CoA and oxaloacetate immediate substrates of de novo lipogenesis and gluconeogenesis, respectively. Recognizes phosphosites having SxS or RxxS motifs and strictly depends on Mn(2+) ions for the phosphatase activity. Regulates Ca(2+)-induced opening of mitochondrial transition pore and apoptotic cell death. This is Protein phosphatase Mn(2+)-dependent 1K (PPM1K) from Bos taurus (Bovine).